The following is a 357-amino-acid chain: 3-dehydroquinate synthase (357 aa).

NAD(+) contacts are provided by residues 99-103, 123-124, Lys135, Lys144, and 162-165; these read GATGD, TT, and FLET. Zn(2+) contacts are provided by Glu177, His247, and His261.

Belongs to the sugar phosphate cyclases superfamily. Dehydroquinate synthase family. It depends on Co(2+) as a cofactor. Requires Zn(2+) as cofactor. NAD(+) is required as a cofactor.

The protein localises to the cytoplasm. It catalyses the reaction 7-phospho-2-dehydro-3-deoxy-D-arabino-heptonate = 3-dehydroquinate + phosphate. Its pathway is metabolic intermediate biosynthesis; chorismate biosynthesis; chorismate from D-erythrose 4-phosphate and phosphoenolpyruvate: step 2/7. Functionally, catalyzes the conversion of 3-deoxy-D-arabino-heptulosonate 7-phosphate (DAHP) to dehydroquinate (DHQ). The sequence is that of 3-dehydroquinate synthase from Macrococcus caseolyticus (strain JCSC5402) (Macrococcoides caseolyticum).